A 486-amino-acid chain; its full sequence is Glutamyl-tRNA(Gln) amidotransferase subunit A (486 aa).

Catalysis depends on charge relay system residues Lys-78 and Ser-153. Ser-177 functions as the Acyl-ester intermediate in the catalytic mechanism.

This sequence belongs to the amidase family. GatA subfamily. As to quaternary structure, heterotrimer of A, B and C subunits.

The catalysed reaction is L-glutamyl-tRNA(Gln) + L-glutamine + ATP + H2O = L-glutaminyl-tRNA(Gln) + L-glutamate + ADP + phosphate + H(+). Allows the formation of correctly charged Gln-tRNA(Gln) through the transamidation of misacylated Glu-tRNA(Gln) in organisms which lack glutaminyl-tRNA synthetase. The reaction takes place in the presence of glutamine and ATP through an activated gamma-phospho-Glu-tRNA(Gln). The protein is Glutamyl-tRNA(Gln) amidotransferase subunit A of Syntrophobacter fumaroxidans (strain DSM 10017 / MPOB).